A 424-amino-acid polypeptide reads, in one-letter code: Zona pellucida sperm-binding protein 3 (424 aa).

Residues Met-1–Pro-22 form the signal peptide. Gln-23 is subject to Pyrrolidone carboxylic acid. The Extracellular portion of the chain corresponds to Gln-23 to Val-387. The region spanning Glu-45–Asn-307 is the ZP domain. Intrachain disulfides connect Cys-46/Cys-140 and Cys-78/Cys-99. Residues Asn-125 and Asn-147 are each glycosylated (N-linked (GlcNAc...) asparagine). 3 O-linked (GalNAc...) threonine glycosylation sites follow: Thr-156, Thr-162, and Thr-163. 2 cysteine pairs are disulfide-bonded: Cys-217–Cys-282 and Cys-239–Cys-300. Residue Asn-272 is glycosylated (N-linked (GlcNAc...) asparagine). The segment at Pro-330 to Glu-356 is disordered. A propeptide spans Arg-351–Glu-424 (removed in mature form). The chain crosses the membrane as a helical span at residues Val-388–Val-408. The Cytoplasmic portion of the chain corresponds to Leu-409–Glu-424.

The protein belongs to the ZP domain family. ZPC subfamily. In terms of assembly, polymers of ZP2 and ZP3 organized into long filaments cross-linked by ZP1 homodimers. Interacts with ZP1 and ZP2. Post-translationally, proteolytically cleaved before the transmembrane segment to yield the secreted ectodomain incorporated in the zona pellucida. N-glycosylated. In terms of processing, O-glycosylated; removal of O-linked glycans may play an important role in the post-fertilization block to polyspermy. In terms of tissue distribution, expressed in oocytes (at protein level).

It localises to the zona pellucida. It is found in the cell membrane. Component of the zona pellucida, an extracellular matrix surrounding oocytes which mediates sperm binding, induction of the acrosome reaction and prevents post-fertilization polyspermy. The zona pellucida is composed of 3 to 4 glycoproteins, ZP1, ZP2, ZP3, and ZP4. ZP3 is essential for sperm binding and zona matrix formation. The polypeptide is Zona pellucida sperm-binding protein 3 (ZP3) (Homo sapiens (Human)).